Reading from the N-terminus, the 243-residue chain is Geranylgeranylglyceryl phosphate synthase (243 aa).

Residues Asp-22 and Ser-51 each coordinate Mg(2+). Sn-glycerol 1-phosphate contacts are provided by residues 170–176, 201–202, and 223–224; these read YLESGSG, GG, and GT.

It belongs to the GGGP/HepGP synthase family. Group II subfamily. Mg(2+) is required as a cofactor.

The protein resides in the cytoplasm. It catalyses the reaction sn-glycerol 1-phosphate + (2E,6E,10E)-geranylgeranyl diphosphate = sn-3-O-(geranylgeranyl)glycerol 1-phosphate + diphosphate. Its pathway is membrane lipid metabolism; glycerophospholipid metabolism. Functionally, prenyltransferase that catalyzes the transfer of the geranylgeranyl moiety of geranylgeranyl diphosphate (GGPP) to the C3 hydroxyl of sn-glycerol-1-phosphate (G1P). This reaction is the first ether-bond-formation step in the biosynthesis of archaeal membrane lipids. The sequence is that of Geranylgeranylglyceryl phosphate synthase from Picrophilus torridus (strain ATCC 700027 / DSM 9790 / JCM 10055 / NBRC 100828 / KAW 2/3).